Consider the following 190-residue polypeptide: RNA pyrophosphohydrolase (190 aa).

The Nudix hydrolase domain occupies Gly6 to Cys149. A Nudix box motif is present at residues Gly38–Gly59.

Belongs to the Nudix hydrolase family. RppH subfamily. It depends on a divalent metal cation as a cofactor.

Functionally, accelerates the degradation of transcripts by removing pyrophosphate from the 5'-end of triphosphorylated RNA, leading to a more labile monophosphorylated state that can stimulate subsequent ribonuclease cleavage. In Xylella fastidiosa (strain Temecula1 / ATCC 700964), this protein is RNA pyrophosphohydrolase.